Reading from the N-terminus, the 76-residue chain is Esculentin-2-ALb (76 aa).

Residues 1–22 (MFTMKKSLLLLFFLGTISLSLC) form the signal peptide. The propeptide occupies 23 to 39 (EEERSADEDDGEKGVKR). C70 and C76 are oxidised to a cystine.

In terms of tissue distribution, expressed by the skin glands.

The protein localises to the secreted. Antimicrobial peptide with activity against Gram-positive and Gram-negative bacteria and against fungi. Has been tested against S.aureus (MIC=1.25 ug/mL), B.pumilus (MIC=2.5 ug/mL), B.cereus (MIC=7.5 ug/mL), E.coli (MIC=12.5 ug/mL), B.dysenteriae (MIC=7.5 ug/mL), A.cacoaceticus (MIC=12.5 ug/mL), P.aeruginosa (MIC=50.0 ug/mL) and C.albicans (MIC=2.5 ug/mL). Also shows a weak hemolytic activity. This chain is Esculentin-2-ALb, found in Amolops loloensis (Lolokou Sucker Frog).